The chain runs to 67 residues: Conotoxin Cl6.6a (67 aa).

Positions M1 to A24 are cleaved as a signal peptide. A propeptide spanning residues T25–P37 is cleaved from the precursor. 3 disulfide bridges follow: C43–C57, C50–C61, and C56–C65.

The protein belongs to the conotoxin O1 superfamily. As to expression, expressed by the venom duct.

The protein resides in the secreted. The chain is Conotoxin Cl6.6a from Californiconus californicus (California cone).